The chain runs to 138 residues: Large ribosomal subunit protein uL16 (138 aa).

Residues 1 to 22 (MQQPARTKYRKQQKGRNKGIAT) form a disordered region. Residues 7 to 17 (TKYRKQQKGRN) are compositionally biased toward basic residues.

Belongs to the universal ribosomal protein uL16 family. In terms of assembly, part of the 50S ribosomal subunit.

Functionally, binds 23S rRNA and is also seen to make contacts with the A and possibly P site tRNAs. This Nitrosospira multiformis (strain ATCC 25196 / NCIMB 11849 / C 71) protein is Large ribosomal subunit protein uL16.